A 126-amino-acid polypeptide reads, in one-letter code: Aspartate 1-decarboxylase (126 aa).

The active-site Schiff-base intermediate with substrate; via pyruvic acid is Ser25. Pyruvic acid (Ser) is present on Ser25. Position 57 (Thr57) interacts with substrate. The active-site Proton donor is the Tyr58. 73-75 (GGA) is a binding site for substrate.

The protein belongs to the PanD family. In terms of assembly, heterooctamer of four alpha and four beta subunits. Pyruvate is required as a cofactor. Is synthesized initially as an inactive proenzyme, which is activated by self-cleavage at a specific serine bond to produce a beta-subunit with a hydroxyl group at its C-terminus and an alpha-subunit with a pyruvoyl group at its N-terminus.

It is found in the cytoplasm. The catalysed reaction is L-aspartate + H(+) = beta-alanine + CO2. It participates in cofactor biosynthesis; (R)-pantothenate biosynthesis; beta-alanine from L-aspartate: step 1/1. Catalyzes the pyruvoyl-dependent decarboxylation of aspartate to produce beta-alanine. In Xanthomonas oryzae pv. oryzae (strain MAFF 311018), this protein is Aspartate 1-decarboxylase.